Consider the following 456-residue polypeptide: G-protein coupled receptor 39 (456 aa).

The Extracellular portion of the chain corresponds to 1 to 34 (MASSSGSNHICSRVIDHSHVPEFEVATWIKITLI). Intrachain disulfides connect Cys11-Cys191 and Cys108-Cys210. Residues His17 and His19 each contribute to the Zn(2+) site. A helical membrane pass occupies residues 35–55 (LVYLIIFVVGILGNSVTIRVT). The Cytoplasmic segment spans residues 56–69 (QVLQKKGYLQKEVT). The chain crosses the membrane as a helical span at residues 70–89 (DHMVSLACSDILVFLIGMPM). Over 90 to 109 (EFYSIIWNPLTTPSYALSCK) the chain is Extracellular. Residues 110–131 (LHTFLFETCSYATLLHVLTLSF) traverse the membrane as a helical segment. Over 132 to 151 (ERYIAICHPFKYKAVSGPRQ) the chain is Cytoplasmic. Residues 152-172 (VKLLIGFVWVTSALVALPLLF) form a helical membrane-spanning segment. The Extracellular portion of the chain corresponds to 173-217 (AMGIEYPLVNVPTHKGLNCNLSRTRHHDEPGNSNMSICTNLSNRW). N-linked (GlcNAc...) asparagine glycans are attached at residues Asn192 and Asn206. A helical transmembrane segment spans residues 218–242 (EVFQSSIFGAFAVYLVVLASVAFMC). Residues 243-283 (WNMMKVLMKSKQGTLAGTGPQLQLRKSESEESRTARRQTII) lie on the Cytoplasmic side of the membrane. A helical membrane pass occupies residues 284–305 (FLRLIVVTLAVCWMPNQIRRIM). The Extracellular portion of the chain corresponds to 306–323 (AAAKPKHDWTRTYFRAYM). Residues 324–344 (ILLPFSDTFFYLSSVVNPLLY) form a helical membrane-spanning segment. Over 345–456 (NVSSQQFRKV…TENSLQEQEV (112 aa)) the chain is Cytoplasmic. At Ser397 the chain carries Phosphoserine. The tract at residues 415-456 (FQTEAKPGEAKPQPLSPESPQTGSETKPAGSTTENSLQEQEV) is disordered. The segment covering 430–456 (SPESPQTGSETKPAGSTTENSLQEQEV) has biased composition (polar residues).

Belongs to the G-protein coupled receptor 1 family. Interacts with HTR1A. Interacts with GALR1. In terms of tissue distribution, expression is detected in septumamygdala, parietal cells, enterocytes, neurons and pancreas, in peripheral organs such as the duodenum and kidney but not in the pituitary and hypothalamus.

The protein localises to the cell membrane. Zinc-sensing receptor that can sense changes in extracellular Zn(2+), mediate Zn(2+) signal transmission, and participates in the regulation of numerous physiological processes including glucose homeostasis regulation, gastrointestinal mobility, hormone secretion and cell death. Activation by Zn(2+) in keratinocytes increases the intracellular concentration of Ca(2+) and activates the ERK/MAPK and PI3K/AKT signaling pathways leading to epithelial repair. Plays an essential role in normal wound healing by inducing the production of cytokines including the major inflammatory cytokine IL6 via the PKC/MAPK/CEBPB pathway. Regulates adipose tissue metabolism, especially lipolysis, and regulates the function of lipases, such as hormone-sensitive lipase and adipose triglyceride lipase. Plays a role in the inhibition of cell death and protects against oxidative, endoplasmic reticulum and mitochondrial stress by inducing secretion of the cytoprotective pigment epithelium-derived growth factor (PEDF) and probably other protective transcripts in a GNA13/RHOA/SRE-dependent manner. Forms dynamic heteroreceptor complexes with HTR1A and GALR1 depending on cell type or specific physiological states, resulting in signaling diversity: HTR1A-GPR39 shows additive increase in signaling along the serum response element (SRE) and NF-kappa-B pathways while GALR1 acts as an antagonist blocking SRE. The sequence is that of G-protein coupled receptor 39 (Gpr39) from Mus musculus (Mouse).